We begin with the raw amino-acid sequence, 498 residues long: Aspartyl aminopeptidase (498 aa).

Histidine 91 provides a ligand contact to Zn(2+). Position 166 (histidine 166) interacts with substrate. A Zn(2+)-binding site is contributed by aspartate 274. Substrate is bound at residue glutamate 311. Zn(2+) is bound by residues glutamate 312 and aspartate 363. Aspartate 363, histidine 366, lysine 391, and tyrosine 398 together coordinate substrate. Histidine 463 provides a ligand contact to Zn(2+).

Belongs to the peptidase M18 family. Tetrahedron-shaped homododecamer built from six homodimers. Requires Zn(2+) as cofactor. Post-translationally, the N-terminus is blocked.

It catalyses the reaction Release of an N-terminal aspartate or glutamate from a peptide, with a preference for aspartate.. Its activity is regulated as follows. Inhibited by zinc. Stimulated by calcium and bacitracin. The protein is Aspartyl aminopeptidase (dapA) of Aspergillus oryzae (strain ATCC 42149 / RIB 40) (Yellow koji mold).